We begin with the raw amino-acid sequence, 213 residues long: Peptidyl-prolyl cis-trans isomerase B (213 aa).

Positions 1–23 (MAVLRVLCGLLLVSILFLGFVLS) are cleaved as a signal peptide. The PPIase cyclophilin-type domain occupies 35–197 (FFDIEVDEQP…KSVKIANCGH (163 aa)). Positions 210 to 213 (DAAE) match the Prevents secretion from ER motif.

Belongs to the cyclophilin-type PPIase family. PPIase B subfamily.

The protein localises to the endoplasmic reticulum lumen. The catalysed reaction is [protein]-peptidylproline (omega=180) = [protein]-peptidylproline (omega=0). With respect to regulation, inhibited by cyclosporin A (CsA). PPIases accelerate the folding of proteins. It catalyzes the cis-trans isomerization of proline imidic peptide bonds in oligopeptides. This chain is Peptidyl-prolyl cis-trans isomerase B, found in Schistosoma japonicum (Blood fluke).